The chain runs to 670 residues: DNA ligase (670 aa).

Residues 33-37 (DAEYD), 82-83 (SL), and E114 contribute to the NAD(+) site. K116 functions as the N6-AMP-lysine intermediate in the catalytic mechanism. Positions 137, 173, 291, and 315 each coordinate NAD(+). Positions 409, 412, 427, and 433 each coordinate Zn(2+). Residues 592–670 (VQSDRLSGNT…ENALAELLSD (79 aa)) form the BRCT domain.

The protein belongs to the NAD-dependent DNA ligase family. LigA subfamily. Mg(2+) is required as a cofactor. The cofactor is Mn(2+).

The enzyme catalyses NAD(+) + (deoxyribonucleotide)n-3'-hydroxyl + 5'-phospho-(deoxyribonucleotide)m = (deoxyribonucleotide)n+m + AMP + beta-nicotinamide D-nucleotide.. Its function is as follows. DNA ligase that catalyzes the formation of phosphodiester linkages between 5'-phosphoryl and 3'-hydroxyl groups in double-stranded DNA using NAD as a coenzyme and as the energy source for the reaction. It is essential for DNA replication and repair of damaged DNA. In Idiomarina loihiensis (strain ATCC BAA-735 / DSM 15497 / L2-TR), this protein is DNA ligase.